A 180-amino-acid polypeptide reads, in one-letter code: Adenine phosphoribosyltransferase (180 aa).

Belongs to the purine/pyrimidine phosphoribosyltransferase family. Homodimer.

It localises to the cytoplasm. It catalyses the reaction AMP + diphosphate = 5-phospho-alpha-D-ribose 1-diphosphate + adenine. Its pathway is purine metabolism; AMP biosynthesis via salvage pathway; AMP from adenine: step 1/1. Catalyzes a salvage reaction resulting in the formation of AMP, that is energically less costly than de novo synthesis. The sequence is that of Adenine phosphoribosyltransferase from Haemophilus influenzae (strain 86-028NP).